We begin with the raw amino-acid sequence, 491 residues long: Glutamyl-tRNA(Gln) amidotransferase subunit A (491 aa).

Catalysis depends on charge relay system residues Lys79 and Ser154. The active-site Acyl-ester intermediate is Ser178.

It belongs to the amidase family. GatA subfamily. Heterotrimer of A, B and C subunits.

The catalysed reaction is L-glutamyl-tRNA(Gln) + L-glutamine + ATP + H2O = L-glutaminyl-tRNA(Gln) + L-glutamate + ADP + phosphate + H(+). Allows the formation of correctly charged Gln-tRNA(Gln) through the transamidation of misacylated Glu-tRNA(Gln) in organisms which lack glutaminyl-tRNA synthetase. The reaction takes place in the presence of glutamine and ATP through an activated gamma-phospho-Glu-tRNA(Gln). The polypeptide is Glutamyl-tRNA(Gln) amidotransferase subunit A (Synechococcus sp. (strain CC9902)).